The primary structure comprises 295 residues: Hydroxylase/desaturase efuI (295 aa).

It belongs to the asaB hydroxylase/desaturase family.

Its pathway is secondary metabolite biosynthesis; terpenoid biosynthesis. Hydroxylase/desaturase; part of the gene cluster that mediates the biosynthesis of enfumafungin, a glycosylated fernene-type triterpenoid with potent antifungal activity, mediated by its interaction with beta-1,3-glucan synthase and the fungal cell wall. The pathway begins with the terpene cyclase-glycosyl transferase fusion protein that most likely uses 2,3-oxidosqualene as substrate and catalyzes glycosylation immediately after cyclization. The fernene glycoside then could be processed by the desaturase efuI which catalyzes isomerization of a double bond established by efuA to form the core structure. The latter would then undergo a series of hydroxylations in unknown order at C-2, C-19, C-23 and C-25, which would be catalyzed by two of the three cytochrome P450 monooxygenases efuB, efuG or efuH. The hydroxy-group at C-25 becomes oxidized by the dehydrogenase efuE to enable a spontaneous, non-enzymatic hemiacetal formation with C-23. After hydroxylation at C-2, acetylation by the acetyltransferase efuC takes place. The final steps in enfumafungin biosynthesis require expansion of the 5-membered ring by lactonization via a Baeyer-Villiger reaction mediated by one of the BGC's cytochrome P450 monooxygenases (efuB, efuG or efuH) followed by ring cleavage. This type of reaction would establish a double bond between C-20 and C-21 which could be reduced by the reductase efuL to form the final product. This chain is Hydroxylase/desaturase efuI, found in Hormonema carpetanum.